The following is a 647-amino-acid chain: DNA mismatch repair protein MutL (647 aa).

The protein belongs to the DNA mismatch repair MutL/HexB family.

In terms of biological role, this protein is involved in the repair of mismatches in DNA. It is required for dam-dependent methyl-directed DNA mismatch repair. May act as a 'molecular matchmaker', a protein that promotes the formation of a stable complex between two or more DNA-binding proteins in an ATP-dependent manner without itself being part of a final effector complex. This is DNA mismatch repair protein MutL from Bacillus cereus (strain G9842).